A 273-amino-acid polypeptide reads, in one-letter code: Dermonecrotic toxin LruSicTox-alphaIC1b (273 aa).

Residue His-5 is part of the active site. The Mg(2+) site is built by Glu-25 and Asp-27. The active-site Nucleophile is the His-41. Cystine bridges form between Cys-45-Cys-51 and Cys-47-Cys-190. Asp-85 provides a ligand contact to Mg(2+).

Belongs to the arthropod phospholipase D family. Class II subfamily. Requires Mg(2+) as cofactor. Expressed by the venom gland.

The protein localises to the secreted. The catalysed reaction is an N-(acyl)-sphingosylphosphocholine = an N-(acyl)-sphingosyl-1,3-cyclic phosphate + choline. The enzyme catalyses an N-(acyl)-sphingosylphosphoethanolamine = an N-(acyl)-sphingosyl-1,3-cyclic phosphate + ethanolamine. It carries out the reaction a 1-acyl-sn-glycero-3-phosphocholine = a 1-acyl-sn-glycero-2,3-cyclic phosphate + choline. It catalyses the reaction a 1-acyl-sn-glycero-3-phosphoethanolamine = a 1-acyl-sn-glycero-2,3-cyclic phosphate + ethanolamine. Dermonecrotic toxins cleave the phosphodiester linkage between the phosphate and headgroup of certain phospholipids (sphingolipid and lysolipid substrates), forming an alcohol (often choline) and a cyclic phosphate. This toxin acts on sphingomyelin (SM). It may also act on ceramide phosphoethanolamine (CPE), lysophosphatidylcholine (LPC) and lysophosphatidylethanolamine (LPE), but not on lysophosphatidylserine (LPS), and lysophosphatidylglycerol (LPG). It acts by transphosphatidylation, releasing exclusively cyclic phosphate products as second products. Induces dermonecrosis, hemolysis, increased vascular permeability, edema, inflammatory response, and platelet aggregation. The polypeptide is Dermonecrotic toxin LruSicTox-alphaIC1b (Loxosceles rufescens (Mediterranean recluse spider)).